The chain runs to 309 residues: tRNA pseudouridine synthase B (309 aa).

D51 (nucleophile) is an active-site residue.

Belongs to the pseudouridine synthase TruB family. Type 1 subfamily.

The catalysed reaction is uridine(55) in tRNA = pseudouridine(55) in tRNA. In terms of biological role, responsible for synthesis of pseudouridine from uracil-55 in the psi GC loop of transfer RNAs. The protein is tRNA pseudouridine synthase B of Coxiella burnetii (strain RSA 331 / Henzerling II).